A 1077-amino-acid polypeptide reads, in one-letter code: Carbamoyl phosphate synthase large chain (1077 aa).

The carboxyphosphate synthetic domain stretch occupies residues 2–403; that stretch reads PKRTDIKSIL…SLQKALRGLE (402 aa). ATP-binding residues include arginine 129, arginine 169, glycine 175, glycine 176, glutamate 208, leucine 210, glutamate 215, glycine 241, isoleucine 242, histidine 243, glutamine 285, and glutamate 299. The 196-residue stretch at 133–328 folds into the ATP-grasp 1 domain; that stretch reads DIAMKKIGLD…IAKIAAKLAV (196 aa). Residues glutamine 285, glutamate 299, and asparagine 301 each coordinate Mg(2+). Glutamine 285, glutamate 299, and asparagine 301 together coordinate Mn(2+). Residues 404–553 are oligomerization domain; sequence VGATGFDPKV…YSTYEEECES (150 aa). The carbamoyl phosphate synthetic domain stretch occupies residues 554-936; that stretch reads NPTSDRPKVM…AFSKAMLGSQ (383 aa). Positions 679–870 constitute an ATP-grasp 2 domain; the sequence is QQAVNRLGLK…LAKIAARVMV (192 aa). 10 residues coordinate ATP: arginine 715, arginine 754, leucine 756, glutamate 761, glycine 786, valine 787, histidine 788, serine 789, glutamine 829, and glutamate 841. 3 residues coordinate Mg(2+): glutamine 829, glutamate 841, and asparagine 843. Residues glutamine 829, glutamate 841, and asparagine 843 each contribute to the Mn(2+) site. The 141-residue stretch at 937–1077 folds into the MGS-like domain; sequence SGMKKSGRAL…MHAKIKNMKA (141 aa). Positions 937 to 1077 are allosteric domain; that stretch reads SGMKKSGRAL…MHAKIKNMKA (141 aa).

This sequence belongs to the CarB family. In terms of assembly, composed of two chains; the small (or glutamine) chain promotes the hydrolysis of glutamine to ammonia, which is used by the large (or ammonia) chain to synthesize carbamoyl phosphate. Tetramer of heterodimers (alpha,beta)4. Requires Mg(2+) as cofactor. Mn(2+) serves as cofactor.

The catalysed reaction is hydrogencarbonate + L-glutamine + 2 ATP + H2O = carbamoyl phosphate + L-glutamate + 2 ADP + phosphate + 2 H(+). The enzyme catalyses hydrogencarbonate + NH4(+) + 2 ATP = carbamoyl phosphate + 2 ADP + phosphate + 2 H(+). It functions in the pathway amino-acid biosynthesis; L-arginine biosynthesis; carbamoyl phosphate from bicarbonate: step 1/1. The protein operates within pyrimidine metabolism; UMP biosynthesis via de novo pathway; (S)-dihydroorotate from bicarbonate: step 1/3. Its function is as follows. Large subunit of the glutamine-dependent carbamoyl phosphate synthetase (CPSase). CPSase catalyzes the formation of carbamoyl phosphate from the ammonia moiety of glutamine, carbonate, and phosphate donated by ATP, constituting the first step of 2 biosynthetic pathways, one leading to arginine and/or urea and the other to pyrimidine nucleotides. The large subunit (synthetase) binds the substrates ammonia (free or transferred from glutamine from the small subunit), hydrogencarbonate and ATP and carries out an ATP-coupled ligase reaction, activating hydrogencarbonate by forming carboxy phosphate which reacts with ammonia to form carbamoyl phosphate. This is Carbamoyl phosphate synthase large chain from Yersinia pestis.